The following is a 299-amino-acid chain: Plasmodesmata-located protein 5 (299 aa).

The signal sequence occupies residues 1-25; it reads MIKTKTTSLLCFLLTAVILMNPSSS. Residues 26–264 lie on the Extracellular side of the membrane; sequence SPTDNYIYAV…NKDDNGVGKT (239 aa). Gnk2-homologous domains lie at 29–135 and 137–237; these read DNYI…NKSF and GVQD…VGGS. Disulfide bonds link C36/C113, C89/C98, C101/C126, C148/C215, C191/C200, and C203/C228. A helical membrane pass occupies residues 265–285; sequence LAIIIGIVTLIILLVVFLAFV. The tract at residues 265 to 285 is necessary and sufficient for plasmodesmal targeting; that stretch reads LAIIIGIVTLIILLVVFLAFV. The Cytoplasmic segment spans residues 286–299; sequence GKCCRKLQDEKWCK.

It belongs to the cysteine-rich repeat secretory protein family. Plasmodesmata-located proteins (PDLD) subfamily. As to quaternary structure, monomer. Interacts with PDLP1. (Microbial infection) Interacts with Grapevine fanleaf virus (GFLV) 2B-MP. As to expression, highly expressed in inflorescence nodes and rosette senescent leaves. Mostly expressed in cell wall junctions between leaf epidermal and mesophyl cells, and to a lesser extent at the cross walls between epidermal or cortex cells within the hypocotyl (at protein level). Low vascular expression in seedling and mature leaf, but high expression in senescing leaves (at protein level).

It is found in the cell membrane. It localises to the cell junction. Its subcellular location is the plasmodesma. Functionally, modulates cell-to-cell trafficking. Has a positive role in innate immunity. Required for systemic acquired resistance (SAR) which is mediated by the signaling molecules azelaic acid (AzA), glycerol-3-phosphate (G3P), and salicylic acid (SA). Negative regulator of plasmodesmata permeability triggered by SA during immune responses, through regulation of callose deposition. Delays the trafficking of Tobacco Mosaic Virus (TMV) movement protein (MP). Required for symplastic signal transport. The polypeptide is Plasmodesmata-located protein 5 (Arabidopsis thaliana (Mouse-ear cress)).